Consider the following 159-residue polypeptide: Small ribosomal subunit protein uS17 (159 aa).

It belongs to the universal ribosomal protein uS17 family.

It is found in the cytoplasm. The polypeptide is Small ribosomal subunit protein uS17 (RPS11) (Zea mays (Maize)).